Reading from the N-terminus, the 341-residue chain is Glucokinase (341 aa).

Residue 18-23 coordinates ATP; it reads GDIGGT.

This sequence belongs to the bacterial glucokinase family.

The protein localises to the cytoplasm. It carries out the reaction D-glucose + ATP = D-glucose 6-phosphate + ADP + H(+). This chain is Glucokinase, found in Rhizobium etli (strain ATCC 51251 / DSM 11541 / JCM 21823 / NBRC 15573 / CFN 42).